The primary structure comprises 280 residues: Eukaryotic translation initiation factor 3 subunit F-1 (280 aa).

The 131-residue stretch at 8 to 138 (VRVHPVVLFQ…LRAYVCIQLG (131 aa)) folds into the MPN domain.

It belongs to the eIF-3 subunit F family. As to quaternary structure, component of the eukaryotic translation initiation factor 3 (eIF-3) complex. The eIF-3 complex interacts with pix.

Its subcellular location is the cytoplasm. In terms of biological role, component of the eukaryotic translation initiation factor 3 (eIF-3) complex, which is involved in protein synthesis of a specialized repertoire of mRNAs and, together with other initiation factors, stimulates binding of mRNA and methionyl-tRNAi to the 40S ribosome. The eIF-3 complex specifically targets and initiates translation of a subset of mRNAs involved in cell proliferation. The sequence is that of Eukaryotic translation initiation factor 3 subunit F-1 from Drosophila yakuba (Fruit fly).